Here is a 553-residue protein sequence, read N- to C-terminus: Mucolipin-3 (553 aa).

The Cytoplasmic portion of the chain corresponds to 1-62 (MANPEVLVSS…FWARGRKPWK (62 aa)). Residues 52-62 (KFWARGRKPWK) form an interaction with phosphoinositides region. A helical transmembrane segment spans residues 63-83 (LAIQILKIAMVTIQLVLFGLS). Residues 84–283 (NQMVVAFKEE…VSGSIQKNTH (200 aa)) are Extracellular-facing. The segment at 104-118 (KGYMDRMDDTYAVYT) is extracellular/lumenal pore loop. An N-linked (GlcNAc...) asparagine glycan is attached at asparagine 138. A disulfide bridge links cysteine 159 with cysteine 185. Asparagine 205 carries an N-linked (GlcNAc...) asparagine glycan. Cysteine 238 and cysteine 269 are joined by a disulfide. A helical membrane pass occupies residues 284 to 304 (YMMIFDAFVILTCLASLVLCA). Residues 305 to 341 (RSVIRGLQLQQEFVNFFLLHYKKEVSASDQMEFINGW) are Cytoplasmic-facing. A helical transmembrane segment spans residues 342–362 (YIMIIISDILTIVGSVLKMEI). Residues 363-371 (QAKSLTSYD) are Extracellular-facing. A helical transmembrane segment spans residues 372-392 (VCSILLGTSTMLVWLGVIRYL). At 393 to 414 (GFFAKYNLLILTLQAALPNVMR) the chain is on the cytoplasmic side. Residues 415-435 (FCCCAAMIYLGYCFCGWIVLG) traverse the membrane as a helical segment. Residues 436-443 (PYHEKFRS) lie on the Extracellular side of the membrane. Residues 444-464 (LNRVSECLFSLINGDDMFSTF) constitute an intramembrane region (pore-forming). Residues 456–459 (NGDD) carry the Selectivity filter motif. The Extracellular portion of the chain corresponds to 465–475 (AKMQQKSYLVW). Residues 476 to 497 (LFSRVYLYSFISLFIYMILSLF) traverse the membrane as a helical segment. Residues 498–553 (IALITDTYETIKHYQQDGFPETELRKFIAECKDLPNSGKYRLEDDPPGSLLCCCKK) lie on the Cytoplasmic side of the membrane.

It belongs to the transient receptor (TC 1.A.4) family. Polycystin subfamily. MCOLN3 sub-subfamily. In terms of assembly, homotetramer. Can heterooligomerize with MCOLN1; heteromeric assemblies have different channel properties as compared to the respective homooligomers and may be tissue-specific. May heterooligomerize with TRPV5 to form a functional distinct ion channel. Interacts with GABARAPL2. In terms of processing, N-glycosylated. In terms of tissue distribution, expressed in the cochlea; particularly in the inner and outer hair cells (at protein level).

It is found in the early endosome membrane. The protein resides in the late endosome membrane. It localises to the cytoplasmic vesicle. Its subcellular location is the autophagosome membrane. The protein localises to the cell projection. It is found in the stereocilium membrane. The enzyme catalyses Ca(2+)(in) = Ca(2+)(out). It carries out the reaction Mg(2+)(in) = Mg(2+)(out). It catalyses the reaction K(+)(in) = K(+)(out). The catalysed reaction is Na(+)(in) = Na(+)(out). Its activity is regulated as follows. Channel activity is activated by PtdIns(3,5)P2 (phosphatidylinositol 3,5-bisphosphate). Inhibited by lumenal H(+) and Na(+). The channel pore shows dynamic behavior and undergoes spontaneous, Ca(2+)-dependent modulation when conducting Ca(2+). In terms of biological role, nonselective cation channel probably playing a role in the regulation of membrane trafficking events. Acts as a Ca(2+)-permeable cation channel with inwardly rectifying activity. Mediates release of Ca(2+) from endosomes to the cytoplasm, contributes to endosomal acidification and is involved in the regulation of membrane trafficking and fusion in the endosomal pathway. Also permeable to Mg(2+), Na(+) and K(+). Does not seem to act as mechanosensory transduction channel in inner ear sensory hair cells. Proposed to play a critical role at the cochlear stereocilia ankle-link region during hair-bundle growth. Involved in the regulation of autophagy. Through association with GABARAPL2 may be involved in autophagosome formation possibly providing Ca(2+) for the fusion process. Through a possible and probably tissue-specific heteromerization with MCOLN1 may be at least in part involved in many lysosome-dependent cellular events. Possible heteromeric ion channel assemblies with TRPV5 show pharmacological similarity with TRPML3. This is Mucolipin-3 (Mcoln3) from Mus musculus (Mouse).